The primary structure comprises 776 residues: Acetone carboxylase alpha subunit (776 aa).

In terms of assembly, heterohexamer of two alpha, two beta and two gamma subunits. Fe cation is required as a cofactor. Requires Mg(2+) as cofactor. Zn(2+) serves as cofactor. The N-terminus is blocked.

The catalysed reaction is acetone + hydrogencarbonate + 2 ATP + 3 H2O = acetoacetate + 2 AMP + 4 phosphate + 4 H(+). Functionally, catalyzes the carboxylation of acetone to form acetoacetate. Has a reduced activity on butanone, and no activity on 2-pentatone, 3-pentatone, 2-hexanone, chloroacetone, pyruvate, phosphoenolpyruvate, acetaldehyde, propionaldehyde and propylene oxide. This is Acetone carboxylase alpha subunit from Xanthobacter autotrophicus (strain ATCC BAA-1158 / Py2).